A 378-amino-acid polypeptide reads, in one-letter code: Opsin Rh4 (378 aa).

The Extracellular portion of the chain corresponds to M1 to M53. The N-linked (GlcNAc...) asparagine glycan is linked to N6. Residues H54–I78 form a helical membrane-spanning segment. The Cytoplasmic portion of the chain corresponds to F79–N90. Residues M91–I111 form a helical membrane-spanning segment. Residues Y112–Q127 lie on the Extracellular side of the membrane. C126 and C203 are oxidised to a cystine. The helical transmembrane segment at I128 to G148 threads the bilayer. Over Y149 to K167 the chain is Cytoplasmic. A helical membrane pass occupies residues A168–D192. Over R193–L216 the chain is Extracellular. Residues F217 to V244 traverse the membrane as a helical segment. Topologically, residues F245–K280 are cytoplasmic. Residues A281 to A304 traverse the membrane as a helical segment. The Extracellular segment spans residues F305–T312. A helical membrane pass occupies residues P313–S337. Residue K324 is modified to N6-(retinylidene)lysine. Residues H338–A378 lie on the Cytoplasmic side of the membrane.

Belongs to the G-protein coupled receptor 1 family. Opsin subfamily. Phosphorylated on some or all of the serine and threonine residues present in the C-terminal region.

The protein localises to the membrane. Its function is as follows. Visual pigments are the light-absorbing molecules that mediate vision. They consist of an apoprotein, opsin, covalently linked to cis-retinal. This chain is Opsin Rh4 (Rh4), found in Drosophila melanogaster (Fruit fly).